The primary structure comprises 236 residues: ATP synthase subunit a (236 aa).

5 helical membrane-spanning segments follow: residues Ser-18–Thr-38, Val-80–Ile-100, Asp-112–Ile-132, Ile-179–Ala-199, and Ile-200–Phe-220.

This sequence belongs to the ATPase A chain family. F-type ATPases have 2 components, CF(1) - the catalytic core - and CF(0) - the membrane proton channel. CF(1) has five subunits: alpha(3), beta(3), gamma(1), delta(1), epsilon(1). CF(0) has three main subunits: a(1), b(2) and c(9-12). The alpha and beta chains form an alternating ring which encloses part of the gamma chain. CF(1) is attached to CF(0) by a central stalk formed by the gamma and epsilon chains, while a peripheral stalk is formed by the delta and b chains.

It is found in the cell membrane. Its function is as follows. Key component of the proton channel; it plays a direct role in the translocation of protons across the membrane. The chain is ATP synthase subunit a from Priestia megaterium (strain ATCC 12872 / QMB1551) (Bacillus megaterium).